A 318-amino-acid chain; its full sequence is Ribose-phosphate pyrophosphokinase 2 (318 aa).

96–101 (RQDKKD) contacts ATP. The Mg(2+) site is built by aspartate 128, histidine 130, aspartate 139, and aspartate 143. An ATP-binding site is contributed by histidine 130. The tract at residues 212–227 (KDRVAILVDDMADTCG) is binding of phosphoribosylpyrophosphate.

This sequence belongs to the ribose-phosphate pyrophosphokinase family. In terms of assembly, homodimer. The active form is probably a hexamer composed of 3 homodimers. Requires Mg(2+) as cofactor.

The catalysed reaction is D-ribose 5-phosphate + ATP = 5-phospho-alpha-D-ribose 1-diphosphate + AMP + H(+). It participates in metabolic intermediate biosynthesis; 5-phospho-alpha-D-ribose 1-diphosphate biosynthesis; 5-phospho-alpha-D-ribose 1-diphosphate from D-ribose 5-phosphate (route I): step 1/1. With respect to regulation, activated by magnesium and inorganic phosphate. Competitively or non-competitively inhibited by ADP, 2,3-bisphosphoglyceride or GDP. Functionally, catalyzes the synthesis of phosphoribosylpyrophosphate (PRPP) that is essential for nucleotide synthesis. The sequence is that of Ribose-phosphate pyrophosphokinase 2 (Prps2) from Mus musculus (Mouse).